Here is a 526-residue protein sequence, read N- to C-terminus: piRNA biogenesis factor prde-1 (526 aa).

The disordered stretch occupies residues 436–526; the sequence is EAKEEPIDKK…RRRGCEIRRK (91 aa). A compositionally biased stretch (basic and acidic residues) spans 439–448; the sequence is EEPIDKKKDP. Residues 458-467 are compositionally biased toward basic residues; sequence GKKRRGRKPK. Positions 468–487 are enriched in basic and acidic residues; sequence KKDDPKMELKDEVKDLKDFV. Residues 489–498 are compositionally biased toward low complexity; the sequence is EESTSASSSA.

In terms of tissue distribution, expressed in male and female germ cells.

It is found in the nucleus. Its subcellular location is the chromosome. In terms of biological role, nuclear factor required for the production of piwi-interacting RNA (piRNA) precursors. Specifically required for piRNAs produced from loci associated with the Ruby motif. Promotes binding of the transcription factor snpc-4 at piRNA genomic clusters. Required for normal fertility. In Caenorhabditis elegans, this protein is piRNA biogenesis factor prde-1.